The sequence spans 439 residues: GTPase Der (439 aa).

EngA-type G domains lie at 2–168 and 181–357; these read ATVL…EEKG and IKIA…SSYT. Residues 8–15, 55–59, 118–121, 187–194, 234–238, and 300–303 each bind GTP; these read GKPNVGKS, DTCGV, NKTE, GRPNVGKS, DTAGL, and NKWD. Residues 358–439 enclose the KH-like domain; sequence TKVPSSALNS…PIFLKFKKSR (82 aa).

This sequence belongs to the TRAFAC class TrmE-Era-EngA-EngB-Septin-like GTPase superfamily. EngA (Der) GTPase family. In terms of assembly, associates with the 50S ribosomal subunit.

GTPase that plays an essential role in the late steps of ribosome biogenesis. The chain is GTPase Der from Thermotoga neapolitana (strain ATCC 49049 / DSM 4359 / NBRC 107923 / NS-E).